A 399-amino-acid polypeptide reads, in one-letter code: S-adenosylmethionine synthase (399 aa).

Residue His-17 participates in ATP binding. Position 19 (Asp-19) interacts with Mg(2+). Glu-45 serves as a coordination point for K(+). Positions 58 and 101 each coordinate L-methionine. Residues 101–111 (QSADIAMGVDQ) are flexible loop. ATP contacts are provided by residues 177-179 (DGK), 244-245 (RF), Asp-253, 259-260 (RK), Ala-276, and Lys-280. Asp-253 is an L-methionine binding site. Position 284 (Lys-284) interacts with L-methionine.

This sequence belongs to the AdoMet synthase family. In terms of assembly, homotetramer; dimer of dimers. The cofactor is Mg(2+). It depends on K(+) as a cofactor.

Its subcellular location is the cytoplasm. It catalyses the reaction L-methionine + ATP + H2O = S-adenosyl-L-methionine + phosphate + diphosphate. Its pathway is amino-acid biosynthesis; S-adenosyl-L-methionine biosynthesis; S-adenosyl-L-methionine from L-methionine: step 1/1. Functionally, catalyzes the formation of S-adenosylmethionine (AdoMet) from methionine and ATP. The overall synthetic reaction is composed of two sequential steps, AdoMet formation and the subsequent tripolyphosphate hydrolysis which occurs prior to release of AdoMet from the enzyme. This is S-adenosylmethionine synthase from Bacillus cereus (strain ATCC 10987 / NRS 248).